The sequence spans 240 residues: Cell division protein FtsQ (240 aa).

At 1-7 (MTGPGLR) the chain is on the cytoplasmic side. The chain crosses the membrane as a helical span at residues 8–28 (LLAGMGLAGALVLGLSLWLHF). Topologically, residues 29-240 (DPDQHLPIGS…EADNDGGNAR (212 aa)) are periplasmic. Positions 34–102 (LPIGSIQITG…DTLEVHVTEP (69 aa)) constitute a POTRA domain.

The protein belongs to the FtsQ/DivIB family. FtsQ subfamily. As to quaternary structure, part of a complex composed of FtsB, FtsL and FtsQ.

The protein resides in the cell inner membrane. Functionally, essential cell division protein. May link together the upstream cell division proteins, which are predominantly cytoplasmic, with the downstream cell division proteins, which are predominantly periplasmic. May control correct divisome assembly. The sequence is that of Cell division protein FtsQ from Thioalkalivibrio sp. (strain K90mix).